Reading from the N-terminus, the 404-residue chain is Formate-dependent phosphoribosylglycinamide formyltransferase (404 aa).

N(1)-(5-phospho-beta-D-ribosyl)glycinamide-binding positions include 25–26 and E85; that span reads EL. ATP contacts are provided by residues R118, K159, 164-169, 199-202, and E207; these read SSGKGQ and EGFV. An ATP-grasp domain is found at 123–318; it reads RLAAEELGLP…EFELHARAIL (196 aa). Positions 277 and 289 each coordinate Mg(2+). N(1)-(5-phospho-beta-D-ribosyl)glycinamide is bound by residues D296, K365, and 372 to 373; that span reads RR.

It belongs to the PurK/PurT family. As to quaternary structure, homodimer.

It catalyses the reaction N(1)-(5-phospho-beta-D-ribosyl)glycinamide + formate + ATP = N(2)-formyl-N(1)-(5-phospho-beta-D-ribosyl)glycinamide + ADP + phosphate + H(+). It participates in purine metabolism; IMP biosynthesis via de novo pathway; N(2)-formyl-N(1)-(5-phospho-D-ribosyl)glycinamide from N(1)-(5-phospho-D-ribosyl)glycinamide (formate route): step 1/1. Functionally, involved in the de novo purine biosynthesis. Catalyzes the transfer of formate to 5-phospho-ribosyl-glycinamide (GAR), producing 5-phospho-ribosyl-N-formylglycinamide (FGAR). Formate is provided by PurU via hydrolysis of 10-formyl-tetrahydrofolate. This Burkholderia cenocepacia (strain HI2424) protein is Formate-dependent phosphoribosylglycinamide formyltransferase.